A 345-amino-acid polypeptide reads, in one-letter code: Anthranilate phosphoribosyltransferase (345 aa).

5-phospho-alpha-D-ribose 1-diphosphate is bound by residues glycine 86, 89–90 (GD), threonine 94, 96–99 (NIST), 114–122 (KHGNRNLSS), and alanine 126. Residue glycine 86 participates in anthranilate binding. A Mg(2+)-binding site is contributed by serine 98. Asparagine 117 is an anthranilate binding site. Residue arginine 172 participates in anthranilate binding. Aspartate 231 and glutamate 232 together coordinate Mg(2+).

Belongs to the anthranilate phosphoribosyltransferase family. In terms of assembly, homodimer. Mg(2+) is required as a cofactor.

It carries out the reaction N-(5-phospho-beta-D-ribosyl)anthranilate + diphosphate = 5-phospho-alpha-D-ribose 1-diphosphate + anthranilate. It functions in the pathway amino-acid biosynthesis; L-tryptophan biosynthesis; L-tryptophan from chorismate: step 2/5. Functionally, catalyzes the transfer of the phosphoribosyl group of 5-phosphorylribose-1-pyrophosphate (PRPP) to anthranilate to yield N-(5'-phosphoribosyl)-anthranilate (PRA). The protein is Anthranilate phosphoribosyltransferase of Jannaschia sp. (strain CCS1).